A 207-amino-acid polypeptide reads, in one-letter code: Large ribosomal subunit protein uL4 (207 aa).

A disordered region spans residues 53–76 (TVSEVSGTTKKPFKQKGTGNARQG).

Belongs to the universal ribosomal protein uL4 family. Part of the 50S ribosomal subunit.

In terms of biological role, one of the primary rRNA binding proteins, this protein initially binds near the 5'-end of the 23S rRNA. It is important during the early stages of 50S assembly. It makes multiple contacts with different domains of the 23S rRNA in the assembled 50S subunit and ribosome. Its function is as follows. Forms part of the polypeptide exit tunnel. This is Large ribosomal subunit protein uL4 from Rickettsia bellii (strain OSU 85-389).